The chain runs to 622 residues: V-type ATP synthase subunit I 1 (622 aa).

8 helical membrane-spanning segments follow: residues 306 to 326 (WVNL…YWEV), 328 to 348 (ISGF…ADAG), 373 to 393 (PAWC…ALVC), 428 to 448 (QMHV…LIVV), 459 to 479 (AEFG…NLIV), 485 to 505 (PLTG…FIFV), 532 to 552 (VFAD…GGAI), and 562 to 582 (PLFA…GHGL).

This sequence belongs to the V-ATPase 116 kDa subunit family.

It is found in the cell membrane. In terms of biological role, produces ATP from ADP in the presence of a proton gradient across the membrane. The protein is V-type ATP synthase subunit I 1 (atpI1) of Treponema pallidum (strain Nichols).